The sequence spans 338 residues: Uroporphyrinogen decarboxylase (338 aa).

Substrate contacts are provided by residues 27 to 31, Asp77, Tyr151, Ser203, and His317; that span reads RQAGR.

It belongs to the uroporphyrinogen decarboxylase family. Homodimer.

The protein resides in the cytoplasm. The catalysed reaction is uroporphyrinogen III + 4 H(+) = coproporphyrinogen III + 4 CO2. The protein operates within porphyrin-containing compound metabolism; protoporphyrin-IX biosynthesis; coproporphyrinogen-III from 5-aminolevulinate: step 4/4. Its function is as follows. Catalyzes the decarboxylation of four acetate groups of uroporphyrinogen-III to yield coproporphyrinogen-III. In Wolbachia pipientis wMel, this protein is Uroporphyrinogen decarboxylase.